We begin with the raw amino-acid sequence, 292 residues long: Ornithine decarboxylase antizyme (292 aa).

Belongs to the ODC antizyme family. Interacts with ODC/SPE1 and thereby sterically blocks ODC homodimerization.

In terms of biological role, ornithine decarboxylase (ODC) antizyme protein that negatively regulates ODC activity and intracellular polyamine biosynthesis in response to increased intracellular polyamine levels. Binds to ODC/SPE1 monomers, inhibiting the assembly of the functional ODC homodimer, and targets the monomers for ubiquitin-independent proteolytic destruction by the 26S proteasome. This chain is Ornithine decarboxylase antizyme (OAZ1), found in Saccharomyces cerevisiae (strain ATCC 204508 / S288c) (Baker's yeast).